Reading from the N-terminus, the 463-residue chain is Cysteine--tRNA ligase (463 aa).

Cysteine 28 contributes to the Zn(2+) binding site. Residues 30–40 (VTIYDLCHIGH) carry the 'HIGH' region motif. Residues cysteine 209, histidine 234, and glutamate 238 each coordinate Zn(2+). Residues 266 to 270 (KMSKS) carry the 'KMSKS' region motif. Lysine 269 provides a ligand contact to ATP.

It belongs to the class-I aminoacyl-tRNA synthetase family. Monomer. It depends on Zn(2+) as a cofactor.

The protein resides in the cytoplasm. The enzyme catalyses tRNA(Cys) + L-cysteine + ATP = L-cysteinyl-tRNA(Cys) + AMP + diphosphate. This chain is Cysteine--tRNA ligase, found in Tolumonas auensis (strain DSM 9187 / NBRC 110442 / TA 4).